The primary structure comprises 301 residues: uncharacterized protein (301 aa).

Belongs to the asfivirus E301R family. Interacts with host IRF3.

Plays a role in the inhibition of host innate immune system by acting as a negatively regulator of type I interferon production. Mechanistically, interacts with and prevents host IRF3 nuclear localization to inhibit its transcriptional activity. This is an uncharacterized protein from Ornithodoros (relapsing fever ticks).